The chain runs to 181 residues: Large ribosomal subunit protein bL17 (181 aa).

Low complexity predominate over residues 141–159 (KAASATAESAPVATANDAA). The segment at 141 to 181 (KAASATAESAPVATANDAAPAEEAEVQGVKDPAEDCEAKAD) is disordered. Basic and acidic residues predominate over residues 171-181 (DPAEDCEAKAD).

This sequence belongs to the bacterial ribosomal protein bL17 family. Part of the 50S ribosomal subunit. Contacts protein L32.

In Geotalea daltonii (strain DSM 22248 / JCM 15807 / FRC-32) (Geobacter daltonii), this protein is Large ribosomal subunit protein bL17.